A 612-amino-acid polypeptide reads, in one-letter code: Protein hinderin (612 aa).

Ser20 carries the phosphoserine modification. Residues 90–166 (LKDLCLEDKR…CQELLSLYQK (77 aa)) are a coiled coil. Position 178 is a phosphoserine (Ser178). Positions 362–406 (IEKQLSEDRRQQLMLQKMELEIEKERLQHLLAQQETKLLLKQQQL) form a coiled coil. Residues 462–477 (STSFKKCPDSPNSGQN) show a composition bias toward polar residues. 2 disordered regions span residues 462–484 (STSF…KKTV) and 509–598 (ETVT…RSPE). 3 positions are modified to phosphoserine: Ser471, Ser527, and Ser558. 2 stretches are compositionally biased toward polar residues: residues 555–568 (QSLS…SQPH) and 575–585 (TWSTLRPTPQK).

Interacts (via N- and C-terminal domains) with SMC3 (via central hinge region).

Competes with SMC1 for binding to SMC3. May affect the availability of SMC3 to engage in the formation of multimeric protein complexes. This is Protein hinderin (Kiaa1328) from Mus musculus (Mouse).